The sequence spans 919 residues: Isoleucine--tRNA ligase (919 aa).

A 'HIGH' region motif is present at residues 57–67 (PYANGHIHIGT). Glu553 lines the L-isoleucyl-5'-AMP pocket. Positions 594–598 (KMSKS) match the 'KMSKS' region motif. Lys597 contacts ATP. Zn(2+) is bound by residues Cys887, Cys890, Cys907, and Cys910.

The protein belongs to the class-I aminoacyl-tRNA synthetase family. IleS type 1 subfamily. As to quaternary structure, monomer. The cofactor is Zn(2+).

The protein localises to the cytoplasm. The enzyme catalyses tRNA(Ile) + L-isoleucine + ATP = L-isoleucyl-tRNA(Ile) + AMP + diphosphate. Functionally, catalyzes the attachment of isoleucine to tRNA(Ile). As IleRS can inadvertently accommodate and process structurally similar amino acids such as valine, to avoid such errors it has two additional distinct tRNA(Ile)-dependent editing activities. One activity is designated as 'pretransfer' editing and involves the hydrolysis of activated Val-AMP. The other activity is designated 'posttransfer' editing and involves deacylation of mischarged Val-tRNA(Ile). The polypeptide is Isoleucine--tRNA ligase (Thermotoga maritima (strain ATCC 43589 / DSM 3109 / JCM 10099 / NBRC 100826 / MSB8)).